A 58-amino-acid polypeptide reads, in one-letter code: Metallothionein-2B (58 aa).

Residues Met-1–Pro-29 form a beta region. Residues Cys-5, Cys-6, Cys-10, Cys-12, Cys-17, Cys-21, Cys-23, Cys-26, Cys-28, Cys-31, Cys-34, Cys-38, Cys-40, Cys-46, Cys-50, Cys-54, Cys-56, and Cys-57 each contribute to the a divalent metal cation site. The segment at Pro-30–Pro-58 is alpha.

Belongs to the metallothionein superfamily. Type 3 family.

Functionally, binds six divalent metal ions. Known to bind copper and cadmium. The protein is Metallothionein-2B of Callinectes sapidus (Blue crab).